The primary structure comprises 672 residues: uncharacterized protein (672 aa).

The N-terminal stretch at 1–24 (MKTLKVLKIFIIVYISSVSLESFA) is a signal peptide. Transmembrane regions (helical) follow at residues 226–246 (IIGA…ALNK) and 254–274 (ITLF…LGPL). Positions 363 to 372 (SNGTSGNNKP) are enriched in polar residues. The disordered stretch occupies residues 363–384 (SNGTSGNNKPIPNFDPDGKKDR). Transmembrane regions (helical) follow at residues 410-430 (IILV…LYFI), 436-456 (CMVT…MVLF), 469-489 (VCIS…LLIT), and 562-582 (VVSI…FYYF). Basic and acidic residues predominate over residues 628-646 (HGKSSLGDKPDIGNKRKDG). Positions 628 to 672 (HGKSSLGDKPDIGNKRKDGAQQGEDAVNSSGGEVADLASGSGGGK) are disordered.

It belongs to the TrbL/VirB6 family.

Its subcellular location is the cell membrane. This is an uncharacterized protein from Rickettsia prowazekii (strain Madrid E).